Here is a 434-residue protein sequence, read N- to C-terminus: Adenylosuccinate synthetase (434 aa).

Residues 15–21 and 43–45 contribute to the GTP site; these read GDEGKGK and GHT. Catalysis depends on Asp16, which acts as the Proton acceptor. Residues Asp16 and Gly43 each coordinate Mg(2+). Residues 16 to 19, 41 to 44, Thr133, Arg147, Gln228, Thr243, and Arg307 contribute to the IMP site; these read DEGK and NAGH. His44 acts as the Proton donor in catalysis. 303–309 serves as a coordination point for substrate; that stretch reads SVTGRAR. GTP is bound by residues Arg309, 335–337, and 418–420; these read KLD and STG.

This sequence belongs to the adenylosuccinate synthetase family. As to quaternary structure, homodimer. Mg(2+) serves as cofactor.

Its subcellular location is the cytoplasm. It carries out the reaction IMP + L-aspartate + GTP = N(6)-(1,2-dicarboxyethyl)-AMP + GDP + phosphate + 2 H(+). It functions in the pathway purine metabolism; AMP biosynthesis via de novo pathway; AMP from IMP: step 1/2. In terms of biological role, plays an important role in the de novo pathway of purine nucleotide biosynthesis. Catalyzes the first committed step in the biosynthesis of AMP from IMP. The sequence is that of Adenylosuccinate synthetase from Neisseria meningitidis serogroup C / serotype 2a (strain ATCC 700532 / DSM 15464 / FAM18).